A 575-amino-acid polypeptide reads, in one-letter code: Regulatory protein zeste (575 aa).

Residues methionine 1 to alanine 26 show a composition bias toward gly residues. Disordered regions lie at residues methionine 1–threonine 53 and serine 151–glutamate 174. Residues serine 2–lysine 47 form a hydrophobic region. Residues threonine 31–proline 51 are compositionally biased toward polar residues. The DNA-binding element occupies asparagine 48–tyrosine 128. Over residues serine 151 to histidine 164 the composition is skewed to low complexity.

Self-associates forming complexes of several hundred monomers.

The protein resides in the nucleus. Its function is as follows. Involved in transvection phenomena (= synapsis-dependent gene expression), where the synaptic pairing of chromosomes carrying genes with which zeste interacts influences the expression of these genes. Zeste binds to DNA and stimulates transcription from a nearby promoter. This is Regulatory protein zeste (z) from Drosophila melanogaster (Fruit fly).